The following is a 199-amino-acid chain: Rho-related protein racG (199 aa).

The GTP site is built by Ala-13, Gly-15, Lys-16, Thr-17, Cys-18, Tyr-32, and Thr-35. Thr-17 contributes to the Mg(2+) binding site. Short sequence motifs (switch) lie at residues 26 to 37 and 57 to 75; these read NAFPNEYIPTVF and DTAG…YPST. Thr-35 is a binding site for Mg(2+). 3 residues coordinate GTP: Lys-116, Asp-118, and Ala-159. Cys-196 carries the cysteine methyl ester modification. The S-geranylgeranyl cysteine moiety is linked to residue Cys-196. The propeptide at 197–199 is removed in mature form; that stretch reads SLF.

It belongs to the small GTPase superfamily. Rho family. Mg(2+) is required as a cofactor.

It is found in the cell membrane. The protein resides in the cytoplasm. The protein localises to the cytoskeleton. It catalyses the reaction GTP + H2O = GDP + phosphate + H(+). With respect to regulation, regulated by guanine nucleotide exchange factors (GEFs) which promote the exchange of bound GDP for free GTP, GTPase activating proteins (GAPs) which increase the GTP hydrolysis activity, and GDP dissociation inhibitors which inhibit the dissociation of the nucleotide from the GTPase. In terms of biological role, small GTPase which cycles between active GTP-bound and inactive GDP-bound states. Involved in actin cytoskeleton remodeling during capping of surface receptors and uroid formation. The chain is Rho-related protein racG from Entamoeba histolytica (strain ATCC 30459 / HM-1:IMSS / ABRM).